Reading from the N-terminus, the 122-residue chain is Large ribosomal subunit protein uL14 (122 aa).

The protein belongs to the universal ribosomal protein uL14 family. Part of the 50S ribosomal subunit. Forms a cluster with proteins L3 and L19. In the 70S ribosome, L14 and L19 interact and together make contacts with the 16S rRNA in bridges B5 and B8.

In terms of biological role, binds to 23S rRNA. Forms part of two intersubunit bridges in the 70S ribosome. This Orientia tsutsugamushi (strain Ikeda) (Rickettsia tsutsugamushi) protein is Large ribosomal subunit protein uL14.